The sequence spans 314 residues: Carbamate kinase (314 aa).

It belongs to the carbamate kinase family.

It localises to the cytoplasm. It catalyses the reaction hydrogencarbonate + NH4(+) + ATP = carbamoyl phosphate + ADP + H2O + H(+). The protein operates within metabolic intermediate metabolism; carbamoyl phosphate degradation; CO(2) and NH(3) from carbamoyl phosphate: step 1/1. The protein is Carbamate kinase (arcC) of Latilactobacillus sakei (Lactobacillus sakei).